The chain runs to 568 residues: MSDSDLKEIEKNAENIKLEPAEDEVNEEDQNEITIPELPEGRVLELRLLSNWGDSHYIGLNSVEIFTSTGERAVIDKVTTNVTEYTGSLESLIVQRVHCKDAEKMWCAKTTEEKIVLTLELKETCKLALIRFWNYNASRVHAQIGVRYLEMYLDGVGIFRGELECAFSADSEFTPVMGETVLFTTSDNILELIALHDVCLISLPEEPISNSSIEMLKADHLTPYRPSTCEAKDAPSTPVTIVPPPIFRQTGTAYKHDVKTLHIELLSNWGMDGLIGLTGLELVDEHSQLIDESQYTVTTSDGNSDLSKKLFNGRNLTRDPHDMWLVDFDSKNFTTISITFHDNVALKAISVWNYNASFELSYAGVKAAKIYINGKLIKNVLLRKATGFVYFDYVQDVVLDPNNTERDFVPKGISQSIGGFVFQIRLLSTWGDEFYIGLNGIELYNRKGELMKIREHNLAAFPESVNILPNIKNDLRTSNNLITQPNDTDIARNMWLTALLPNRCARVFFVFDVQTYISKIVIYNYRKTPERGVRHISVTVDDLIIFSGEIPSSTATLTGNLEINLMDI.

Residues 1–20 (MSDSDLKEIEKNAENIKLEP) are compositionally biased toward basic and acidic residues. A disordered region spans residues 1–30 (MSDSDLKEIEKNAENIKLEPAEDEVNEEDQ). Residues 21-30 (AEDEVNEEDQ) show a composition bias toward acidic residues.

As to expression, expressed in most ciliated neuronal cells. Not expressed in non-ciliated cells.

It localises to the cytoplasm. It is found in the cytoskeleton. The protein resides in the cilium axoneme. The protein localises to the cilium basal body. Functionally, may regulate ciliary A-tubule number and, along with arl-13, controls cilium integrity. The polypeptide is Protein KATNIP homolog (Caenorhabditis elegans).